Here is a 125-residue protein sequence, read N- to C-terminus: Holo-[acyl-carrier-protein] synthase (125 aa).

Mg(2+) contacts are provided by Asp9 and Glu58.

This sequence belongs to the P-Pant transferase superfamily. AcpS family. The cofactor is Mg(2+).

It localises to the cytoplasm. It catalyses the reaction apo-[ACP] + CoA = holo-[ACP] + adenosine 3',5'-bisphosphate + H(+). Functionally, transfers the 4'-phosphopantetheine moiety from coenzyme A to a Ser of acyl-carrier-protein. The protein is Holo-[acyl-carrier-protein] synthase of Shewanella amazonensis (strain ATCC BAA-1098 / SB2B).